The following is a 355-amino-acid chain: Peptide chain release factor 1 (355 aa).

Gln234 bears the N5-methylglutamine mark.

Belongs to the prokaryotic/mitochondrial release factor family. In terms of processing, methylated by PrmC. Methylation increases the termination efficiency of RF1.

Its subcellular location is the cytoplasm. In terms of biological role, peptide chain release factor 1 directs the termination of translation in response to the peptide chain termination codons UAG and UAA. The chain is Peptide chain release factor 1 from Metamycoplasma arthritidis (strain 158L3-1) (Mycoplasma arthritidis).